A 319-amino-acid polypeptide reads, in one-letter code: Acetyl-coenzyme A carboxylase carboxyl transferase subunit alpha (319 aa).

A CoA carboxyltransferase C-terminal domain is found at 34–295 (ELEEEVSKLK…KVRLKRDLAD (262 aa)).

Belongs to the AccA family. As to quaternary structure, acetyl-CoA carboxylase is a heterohexamer composed of biotin carboxyl carrier protein (AccB), biotin carboxylase (AccC) and two subunits each of ACCase subunit alpha (AccA) and ACCase subunit beta (AccD).

Its subcellular location is the cytoplasm. The catalysed reaction is N(6)-carboxybiotinyl-L-lysyl-[protein] + acetyl-CoA = N(6)-biotinyl-L-lysyl-[protein] + malonyl-CoA. It participates in lipid metabolism; malonyl-CoA biosynthesis; malonyl-CoA from acetyl-CoA: step 1/1. In terms of biological role, component of the acetyl coenzyme A carboxylase (ACC) complex. First, biotin carboxylase catalyzes the carboxylation of biotin on its carrier protein (BCCP) and then the CO(2) group is transferred by the carboxyltransferase to acetyl-CoA to form malonyl-CoA. This chain is Acetyl-coenzyme A carboxylase carboxyl transferase subunit alpha, found in Pseudoalteromonas translucida (strain TAC 125).